The following is a 272-amino-acid chain: Sulfate transporter CysZ (272 aa).

4 helical membrane-spanning segments follow: residues 29–49 (FVIMPIVLNTVLLCGLFWLFI), 66–86 (WLSFLSVILLILSILTILLLF), 148–168 (IIALFLLSFIPLVGQTIVPVL), and 219–239 (FVPVINLLIMPVAVCGATLMW).

Belongs to the CysZ family.

It is found in the cell inner membrane. Functionally, high affinity, high specificity proton-dependent sulfate transporter, which mediates sulfate uptake. Provides the sulfur source for the cysteine synthesis pathway. The chain is Sulfate transporter CysZ from Haemophilus influenzae (strain ATCC 51907 / DSM 11121 / KW20 / Rd).